The sequence spans 279 residues: HTH-type transcriptional regulator HdfR (279 aa).

Positions 1 to 58 constitute an HTH lysR-type domain; that stretch reads MDTELLKTFLEVSRTRHFGRAAESLYLTQSAVSFRIRQLENQLGVNLFTRHRNNIRLT. Positions 18-37 form a DNA-binding region, H-T-H motif; that stretch reads FGRAAESLYLTQSAVSFRIR.

It belongs to the LysR transcriptional regulatory family.

Its function is as follows. Negatively regulates the transcription of the flagellar master operon flhDC by binding to the upstream region of the operon. In Escherichia coli (strain ATCC 8739 / DSM 1576 / NBRC 3972 / NCIMB 8545 / WDCM 00012 / Crooks), this protein is HTH-type transcriptional regulator HdfR.